The chain runs to 493 residues: UDP-glucose 6-dehydrogenase (493 aa).

NAD(+)-binding positions include 11–16 (GAGYVG), Asp36, Arg41, and 89–93 (VNTPT). Residues 88–110 (SVNTPTKTYGMGKGRAADLKYIE) form a disordered region. Lys107 carries the N6-acetyllysine modification. The segment at 129 to 135 (KSTVPVR) is allosteric switch region. Residue 130–132 (STV) coordinates NAD(+). Glu161 serves as the catalytic Proton donor/acceptor. Residues 161–165 (EFLAE), 220–224 (KLAAN), Arg260, and 267–273 (KASVGFG) each bind substrate. Glu165 lines the NAD(+) pocket. Residue Lys220 is the Proton donor/acceptor of the active site. The Nucleophile role is filled by Cys276. 276 to 279 (CFQK) contributes to the NAD(+) binding site. The tract at residues 321–325 (SLFNT) is important for formation of active hexamer structure. 338–339 (FK) is a binding site for substrate. Arg346 provides a ligand contact to NAD(+). Arg442 serves as a coordination point for substrate. A disordered region spans residues 466-493 (VSSKRIPYTPGEIPKFSLQDPPNKKPKV). Thr474 carries the post-translational modification Phosphothreonine.

This sequence belongs to the UDP-glucose/GDP-mannose dehydrogenase family. Homohexamer.

The catalysed reaction is UDP-alpha-D-glucose + 2 NAD(+) + H2O = UDP-alpha-D-glucuronate + 2 NADH + 3 H(+). Its pathway is nucleotide-sugar biosynthesis; UDP-alpha-D-glucuronate biosynthesis; UDP-alpha-D-glucuronate from UDP-alpha-D-glucose: step 1/1. With respect to regulation, UDP-alpha-D-xylose (UDX) acts as a feedback inhibitor. It binds at the same site as the substrate, but functions as allosteric inhibitor by triggering a conformation change that disrupts the active hexameric ring structure and gives rise to an inactive, horseshoe-shaped hexamer. Catalyzes the formation of UDP-alpha-D-glucuronate, a constituent of complex glycosaminoglycans. Required for the biosynthesis of chondroitin sulfate and heparan sulfate. Required for embryonic development via its role in the biosynthesis of glycosaminoglycans. Required for proper brain and neuronal development. This chain is UDP-glucose 6-dehydrogenase (Ugdh), found in Rattus norvegicus (Rat).